The chain runs to 102 residues: PE family immunomodulator PE15 (102 aa).

Positions 3–91 constitute a PE domain; it reads LRVVPESLAG…SGASYAARDA (89 aa).

It belongs to the mycobacterial PE family.

It is found in the secreted. It localises to the cell envelope. The protein localises to the cell surface. Functionally, may play a pivotal role in the evasion of host immune response by M.tuberculosis. Mediates production of IL-10 via activation of the p38 and ERK1/2 mitogen-activated protein kinase (MAPK) signaling pathways. This Mycobacterium tuberculosis (strain CDC 1551 / Oshkosh) protein is PE family immunomodulator PE15 (PE15).